The primary structure comprises 230 residues: Thymidylate kinase (230 aa).

20 to 27 (GGEGSGKS) provides a ligand contact to ATP.

Belongs to the thymidylate kinase family.

The catalysed reaction is dTMP + ATP = dTDP + ADP. Functionally, phosphorylation of dTMP to form dTDP in both de novo and salvage pathways of dTTP synthesis. The protein is Thymidylate kinase of Nitrobacter winogradskyi (strain ATCC 25391 / DSM 10237 / CIP 104748 / NCIMB 11846 / Nb-255).